A 454-amino-acid polypeptide reads, in one-letter code: Glutamine synthetase (454 aa).

The GS beta-grasp domain maps to 25–111 (QGIDFLRLQF…LICDVVDREG (87 aa)). The GS catalytic domain maps to 118–454 (PRQVLKNVLA…WETDRYLEKF (337 aa)). The Mg(2+) site is built by glutamate 141 and glutamate 143. Glutamate 193 provides a ligand contact to ATP. Mg(2+) is bound by residues glutamate 198 and glutamate 205. L-glutamate contacts are provided by residues 249-250 (NG) and glycine 250. A Mg(2+)-binding site is contributed by histidine 254. ATP-binding positions include 256–258 (HIS) and serine 258. Arginine 308, glutamate 314, and arginine 326 together coordinate L-glutamate. ATP-binding residues include arginine 326 and arginine 331. Glutamate 343 contacts Mg(2+). Arginine 345 lines the L-glutamate pocket.

The protein belongs to the glutamine synthetase family. In terms of assembly, oligomer of 12 subunits arranged in the form of two hexagons. In its feedback-inhibited form, interacts with TnrA in order to block its DNA-binding activity. Mg(2+) serves as cofactor.

It localises to the cytoplasm. The enzyme catalyses L-glutamate + NH4(+) + ATP = L-glutamine + ADP + phosphate + H(+). Its activity is regulated as follows. Inhibited by glutamine. In terms of biological role, glutamine synthetase (GS) is an unusual multitasking protein that functions as an enzyme, a transcription coregulator, and a chaperone in ammonium assimilation and in the regulation of genes involved in nitrogen metabolism. It catalyzes the ATP-dependent biosynthesis of glutamine from glutamate and ammonia. Feedback-inhibited GlnA also interacts with and regulates the activity of the transcriptional regulator TnrA. During nitrogen limitation, TnrA is in its DNA-binding active state and turns on the transcription of genes required for nitrogen assimilation. Under conditions of nitrogen excess, feedback-inhibited GlnA forms a stable complex with TnrA, which inhibits its DNA-binding activity. In contrast, feedback-inhibited GlnA acts as a chaperone to stabilize the DNA-binding activity of GlnR, which represses the transcription of nitrogen assimilation genes. The polypeptide is Glutamine synthetase (Halobacterium salinarum (strain ATCC 700922 / JCM 11081 / NRC-1) (Halobacterium halobium)).